The chain runs to 497 residues: Ethanolamine-phosphate phospho-lyase (497 aa).

N6-(pyridoxal phosphate)lysine is present on Lys278. Residues 440-497 (TGAETESGISKNTPCRTKMPKEAQSELLRDSSLESRENPSQKRNGLCTDSLLSKRLRT) form a disordered region. Residues 458–479 (MPKEAQSELLRDSSLESRENPS) show a composition bias toward basic and acidic residues.

It belongs to the class-III pyridoxal-phosphate-dependent aminotransferase family. As to quaternary structure, homotetramer. Pyridoxal 5'-phosphate serves as cofactor.

It localises to the mitochondrion. The catalysed reaction is phosphoethanolamine + H2O = acetaldehyde + NH4(+) + phosphate. Its function is as follows. Catalyzes the pyridoxal-phosphate-dependent breakdown of phosphoethanolamine, converting it to ammonia, inorganic phosphate and acetaldehyde. This Bos taurus (Bovine) protein is Ethanolamine-phosphate phospho-lyase (ETNPPL).